We begin with the raw amino-acid sequence, 336 residues long: Potassium channel subfamily K member 1 (336 aa).

The Cytoplasmic portion of the chain corresponds to 1 to 20 (MLQSLAGSSCVRLVERHRSA). The chain crosses the membrane as a helical span at residues 21 to 41 (WCFGFLVLGYLLYLVFGAVVF). Topologically, residues 42-103 (SSVELPYEDL…SNASGNWNWD (62 aa)) are extracellular. A glycan (N-linked (GlcNAc...) asparagine) is linked at Asn-95. The segment at residues 104-116 (FTSALFFASTVLS) is an intramembrane region (helical). Residues 117–122 (TTGYGH) lie within the membrane without spanning it. The selectivity filter 1 stretch occupies residues 117–122 (TTGYGH). Topologically, residues 123–132 (TVPLSDGGKA) are extracellular. Residues 133-156 (FCIIYSVIGIPFTLLFLTAVVQRV) traverse the membrane as a helical segment. At 157–181 (TVHVTRRPVLYFHIRWGFSKQVVAI) the chain is on the cytoplasmic side. Residues 182–202 (VHAVLLGFVTVSCFFFIPAAV) traverse the membrane as a helical segment. Residues 203–211 (FSVLEDDWN) are Extracellular-facing. Positions 212–224 (FLESFYFCFISLS) form an intramembrane region, helical. The tract at residues 225–230 (TIGLGD) is selectivity filter 2. The stretch at 225–231 (TIGLGDY) is an intramembrane region. Residues 232–243 (VPGEGYNQKFRE) are Extracellular-facing. A helical membrane pass occupies residues 244–267 (LYKIGITCYLLLGLIAMLVVLETF). The Cytoplasmic portion of the chain corresponds to 268 to 336 (CELHELKKFR…PPYEDGSANH (69 aa)). A Glycyl lysine isopeptide (Lys-Gly) (interchain with G-Cter in SUMO) cross-link involves residue Lys-274. Positions 293-299 (IMEHDQL) are important for intracellular retention in recycling endosomes. Positions 310–336 (GLKEEQKQNEPFVASQSPPYEDGSANH) are disordered. Phosphoserine is present on Ser-326.

This sequence belongs to the two pore domain potassium channel (TC 1.A.1.8) family. As to quaternary structure, homodimer; disulfide-linked. Heterodimer with KCNK2; disulfide-linked. In astrocytes, forms mostly heterodimeric potassium channels with KCNK2, with only a minor proportion of functional channels containing homodimeric KCNK1. Interacts with KCNK3 and KCNK9, forming functional heterodimeric channels. Interacts with GNG4. Identified in a complex with PSD and ARF6; interacts only with PSD that is bound to ARF6. Interacts with UBE2I. In terms of processing, sumoylation is controversial. Sumoylated by UBE2I. Not sumoylated when expressed in xenopus oocytes or mammalian cells. Sumoylation inactivates the channel, but does not interfere with expression at the cell membrane. Sumoylation of a single subunit is sufficient to silence the dimeric channel. Sumoylation of KCNK1 is sufficient to silence heterodimeric channels formed by KCNK1 and KCNK3 or KCNK9. Desumoylated by SENP1; this activates the channel. Desumoylated by SENP1; this strongly increases halothane-mediated activation of heterodimeric channels formed with KCNK9. SENP1 treatment has no effect. Detected in brain and in kidney cortex and medulla, especially at the renal brush border membranes of the proximal convoluted tubules, in distal tubules and on intercalated cells of the collecting duct. Detected in cerebellum granule neurons. Detected in astrocytes in hippocampus stratum radiatum. Highly expressed in the stria vascularis in the cochlea. Detected in neurons in Scarpa's ganglion in the inner ear, at nerve terminals in the crista ampullaris, in supporting cells and dark cells, but not in hair cells (at protein level). Detected in the brain cerebellar granule cell layer, amygdala, thalamus reticular nucleus, habenula, mesencephalic trigeminal neurons, neocortex and piriform cortex, and at lower levels in the olfactory bulb. Detected in Scarpa's ganglia and crista ampullaris in the inner ear.

It is found in the cell membrane. It localises to the recycling endosome. The protein resides in the apical cell membrane. Its subcellular location is the cytoplasmic vesicle. The protein localises to the perikaryon. It is found in the cell projection. It localises to the dendrite. The protein resides in the synaptic cell membrane. The catalysed reaction is K(+)(in) = K(+)(out). It catalyses the reaction NH4(+)(in) = NH4(+)(out). The enzyme catalyses Na(+)(in) = Na(+)(out). It carries out the reaction Rb(+)(in) = Rb(+)(out). The catalysed reaction is Cs(+)(in) = Cs(+)(out). It catalyses the reaction Li(+)(in) = Li(+)(out). The enzyme catalyses L-glutamate(out) = L-glutamate(in). It carries out the reaction chloride(in) = chloride(out). Inhibited by 100 uM quinine. Slightly inhibited by Ba(+). Activity is first increased and then decreased when the extracellular pH is lowered to 6.0. Its function is as follows. Ion channel that contributes to passive transmembrane potassium transport and to the regulation of the resting membrane potential in brain astrocytes, but also in kidney and in other tissues. Forms dimeric channels through which potassium ions pass in accordance with their electrochemical gradient. The channel is selective for K(+) ions at physiological potassium concentrations and at neutral pH, but becomes permeable to Na(+) at subphysiological K(+) levels and upon acidification of the extracellular medium. The homodimer has very low potassium channel activity, when expressed in heterologous systems, and can function as weakly inward rectifying potassium channel. Channel activity is modulated by activation of serotonin receptors. Heterodimeric channels containing KCNK1 and KCNK2 have much higher activity, and may represent the predominant form in astrocytes. Heterodimeric channels containing KCNK1 and KCNK3 or KCNK9 have much higher activity. Heterodimeric channels formed by KCNK1 and KCNK9 may contribute to halothane-sensitive currents. Mediates outward rectifying potassium currents in dentate gyrus granule cells and contributes to the regulation of their resting membrane potential. Contributes to the regulation of action potential firing in dentate gyrus granule cells and down-regulates their intrinsic excitability. Contributes to the regulation of the resting membrane potential of pancreatic beta cells. In astrocytes, the heterodimer formed by KCNK1 and KCNK2 is required for rapid glutamate release in response to activation of G-protein coupled receptors, such as F2R and CNR1. Required for normal ion and water transport in the kidney. The low channel activity of homodimeric KCNK1 may be due to sumoylation. The low channel activity may be due to rapid internalization from the cell membrane and retention in recycling endosomes. Permeable to monovalent cations with ion selectivity for K(+) &gt; Rb(+) &gt;&gt; NH4(+) &gt;&gt; Cs(+) = Na(+) = Li(+). This Rattus norvegicus (Rat) protein is Potassium channel subfamily K member 1.